The chain runs to 734 residues: Photosystem I P700 chlorophyll a apoprotein A2 (734 aa).

8 helical membrane passes run 46-69, 135-158, 175-199, 273-291, 330-353, 369-395, 417-439, and 517-535; these read IFASHFGQLAVIFLWTSGNLFHVA, LYTGALFLLALSALFLIAGWLHLQ, LNHHLSGLFGVSSLAWTGHLVHVAI, IAHHHLAIAVVFIIAGHMY, LHFQLGLALAALGVITSLVAQHMY, AALYTHHQYIAGFIMTGAFAHGAIFFI, AIISHLSWASLFLGFHTLGLYVH, and FLVHHAIALGLHTTTSIPV. [4Fe-4S] cluster contacts are provided by C559 and C568. Helical transmembrane passes span 575–596 and 643–665; these read AFYLSVFWMLNTIGWVTFYWHW and LSVWAWMFLFGHLVWAIGFMFLI. Residues H654, M662, and Y670 each coordinate chlorophyll a. W671 contacts phylloquinone. Residues 707–727 form a helical membrane-spanning segment; sequence LVGLAHFSVGYIFTYAAFLIA.

This sequence belongs to the PsaA/PsaB family. In terms of assembly, the PsaA/B heterodimer binds the P700 chlorophyll special pair and subsequent electron acceptors. PSI consists of a core antenna complex that captures photons, and an electron transfer chain that converts photonic excitation into a charge separation. The eukaryotic PSI reaction center is composed of at least 11 subunits. P700 is a chlorophyll a/chlorophyll a' dimer, A0 is one or more chlorophyll a, A1 is one or both phylloquinones and FX is a shared 4Fe-4S iron-sulfur center. serves as cofactor.

It localises to the plastid. Its subcellular location is the chloroplast thylakoid membrane. It carries out the reaction reduced [plastocyanin] + hnu + oxidized [2Fe-2S]-[ferredoxin] = oxidized [plastocyanin] + reduced [2Fe-2S]-[ferredoxin]. PsaA and PsaB bind P700, the primary electron donor of photosystem I (PSI), as well as the electron acceptors A0, A1 and FX. PSI is a plastocyanin-ferredoxin oxidoreductase, converting photonic excitation into a charge separation, which transfers an electron from the donor P700 chlorophyll pair to the spectroscopically characterized acceptors A0, A1, FX, FA and FB in turn. Oxidized P700 is reduced on the lumenal side of the thylakoid membrane by plastocyanin. The protein is Photosystem I P700 chlorophyll a apoprotein A2 of Angiopteris evecta (Mule's foot fern).